Here is a 328-residue protein sequence, read N- to C-terminus: UPF0421 protein SE_1574 (328 aa).

The next 4 helical transmembrane spans lie at 26–46 (LFCM…IVTI), 61–81 (LPAT…FGDQ), 109–129 (AVLT…FNFF), and 132–152 (LLTA…ILPP).

The protein belongs to the UPF0421 family.

The protein localises to the cell membrane. This chain is UPF0421 protein SE_1574, found in Staphylococcus epidermidis (strain ATCC 12228 / FDA PCI 1200).